Reading from the N-terminus, the 580-residue chain is Frizzled and smoothened-like protein K (580 aa).

Positions 1–18 are cleaved as a signal peptide; sequence MRVLFILFLFYFYTYTEA. Topologically, residues 19–236 are extracellular; that stretch reads QQYYPIDPTG…QWDNIFDTSD (218 aa). The region spanning 25 to 154 is the FZ domain; sequence DPTGKCEQYI…SSDYNLTTYG (130 aa). N-linked (GlcNAc...) asparagine glycans are attached at residues Asn-52, Asn-97, Asn-149, Asn-170, and Asn-186. Residues 237 to 257 form a helical membrane-spanning segment; that stretch reads AISLVSLLCSVYLFITYMVIN. The Cytoplasmic portion of the chain corresponds to 258 to 264; that stretch reads PKRNKYD. A helical membrane pass occupies residues 265-285; it reads YFFSFFVLSIILMSIAGTIGF. The Extracellular portion of the chain corresponds to 286–308; it reads SVGGTRKLLCPEINRRGVYTDPA. The helical transmembrane segment at 309-329 threads the bilayer; that stretch reads VAAAGWIFQFAIINAILWFSI. Residues 330 to 349 are Cytoplasmic-facing; the sequence is NSFELWFQIKFIKRKLHLIK. A helical membrane pass occupies residues 350-370; that stretch reads FYILAVLVISIALSVPLSAIG. At 371-391 the chain is on the extracellular side; the sequence is EFNAGLGNFVVWIESGKYQNW. The chain crosses the membrane as a helical span at residues 392–412; it reads FFWGPLGIVLTVGTTFIGLVI. The Cytoplasmic portion of the chain corresponds to 413-434; the sequence is WEIYKIVSSTNKSDFFKLQLKP. Residues 435 to 455 form a helical membrane-spanning segment; sequence LMNMLLIYLTFVYLFGYNFYI. The Extracellular segment spans residues 456 to 490; it reads HNSLNGFYGSSEEFKNCIISTDGKDCRIQGPPYSS. Residues 491–511 form a helical membrane-spanning segment; the sequence is ILMFVFCLRIYGVYCIALYGF. Residues 512–580 lie on the Cytoplasmic side of the membrane; that stretch reads SPKTRSIWSN…SMEPDEIILR (69 aa). The short motif at 514–519 is the Lys-Thr-X-X-X-Trp motif, mediates interaction with the PDZ domain of Dvl family members element; it reads KTRSIW. The disordered stretch occupies residues 542–580; that stretch reads TTKGGTSSTDIKMSTNNNSNMDSGGGKSSSMEPDEIILR. The span at 551–563 shows a compositional bias: polar residues; that stretch reads DIKMSTNNNSNMD.

It belongs to the G-protein coupled receptor Fz/Smo family.

It localises to the membrane. This is Frizzled and smoothened-like protein K (fslK) from Dictyostelium discoideum (Social amoeba).